The following is a 100-amino-acid chain: Urease subunit gamma (100 aa).

This sequence belongs to the urease gamma subunit family. Heterotrimer of UreA (gamma), UreB (beta) and UreC (alpha) subunits. Three heterotrimers associate to form the active enzyme.

The protein localises to the cytoplasm. It carries out the reaction urea + 2 H2O + H(+) = hydrogencarbonate + 2 NH4(+). The protein operates within nitrogen metabolism; urea degradation; CO(2) and NH(3) from urea (urease route): step 1/1. In Cereibacter sphaeroides (strain ATCC 17029 / ATH 2.4.9) (Rhodobacter sphaeroides), this protein is Urease subunit gamma.